A 508-amino-acid chain; its full sequence is Beta-glucosidase 10 (508 aa).

The signal sequence occupies residues 1 to 22 (MKLYSLLSVFLVILLATSDSDA). Residues Gln-42, His-142, and 187–188 (NE) contribute to the a beta-D-glucoside site. The active-site Proton donor is Glu-188. A disulfide bridge connects residues Cys-207 and Cys-215. N-linked (GlcNAc...) asparagine glycans are attached at residues Asn-214 and Asn-219. Tyr-331 provides a ligand contact to a beta-D-glucoside. N-linked (GlcNAc...) asparagine glycosylation occurs at Asn-365. Glu-398 is an a beta-D-glucoside binding site. The active-site Nucleophile is the Glu-398. N-linked (GlcNAc...) asparagine glycosylation occurs at Asn-431. A beta-D-glucoside-binding residues include Trp-441 and Phe-457. Asn-463, Asn-485, and Asn-501 each carry an N-linked (GlcNAc...) asparagine glycan.

The protein belongs to the glycosyl hydrolase 1 family.

The enzyme catalyses Hydrolysis of terminal, non-reducing beta-D-glucosyl residues with release of beta-D-glucose.. This is Beta-glucosidase 10 from Arabidopsis thaliana (Mouse-ear cress).